The primary structure comprises 307 residues: Aspartate carbamoyltransferase catalytic subunit (307 aa).

The carbamoyl phosphate site is built by Arg59 and Thr60. Position 87 (Lys87) interacts with L-aspartate. Carbamoyl phosphate is bound by residues Arg109, His137, and Gln140. L-aspartate is bound by residues Arg170 and Arg224. Carbamoyl phosphate contacts are provided by Gly265 and Pro266.

It belongs to the aspartate/ornithine carbamoyltransferase superfamily. ATCase family. As to quaternary structure, heterododecamer (2C3:3R2) of six catalytic PyrB chains organized as two trimers (C3), and six regulatory PyrI chains organized as three dimers (R2).

It carries out the reaction carbamoyl phosphate + L-aspartate = N-carbamoyl-L-aspartate + phosphate + H(+). Its pathway is pyrimidine metabolism; UMP biosynthesis via de novo pathway; (S)-dihydroorotate from bicarbonate: step 2/3. Catalyzes the condensation of carbamoyl phosphate and aspartate to form carbamoyl aspartate and inorganic phosphate, the committed step in the de novo pyrimidine nucleotide biosynthesis pathway. This Cytophaga hutchinsonii (strain ATCC 33406 / DSM 1761 / CIP 103989 / NBRC 15051 / NCIMB 9469 / D465) protein is Aspartate carbamoyltransferase catalytic subunit.